Here is a 373-residue protein sequence, read N- to C-terminus: sn-glycerol-3-phosphate import ATP-binding protein UgpC 2 (373 aa).

An ABC transporter domain is found at 4–234 (IDIRQVRKSY…PASTFVASFI (231 aa)). Residue 36–43 (GPSGCGKS) coordinates ATP.

Belongs to the ABC transporter superfamily. sn-glycerol-3-phosphate importer (TC 3.A.1.1.3) family. As to quaternary structure, the complex is composed of two ATP-binding proteins (UgpC), two transmembrane proteins (UgpA and UgpE) and a solute-binding protein (UgpB).

It localises to the cell inner membrane. It catalyses the reaction sn-glycerol 3-phosphate(out) + ATP + H2O = sn-glycerol 3-phosphate(in) + ADP + phosphate + H(+). Part of the ABC transporter complex UgpBAEC involved in sn-glycerol-3-phosphate (G3P) import. Responsible for energy coupling to the transport system. The chain is sn-glycerol-3-phosphate import ATP-binding protein UgpC 2 from Agrobacterium fabrum (strain C58 / ATCC 33970) (Agrobacterium tumefaciens (strain C58)).